Here is a 972-residue protein sequence, read N- to C-terminus: DNA cross-link repair 1A protein (972 aa).

The disordered stretch occupies residues 14–80 (YKSIRKRKPQ…SEDLDPCKDD (67 aa)). Polar residues predominate over residues 23–37 (QSNPDSTSVSMQTVT). The span at 39–54 (GKCRPKRKGSGNRKKS) shows a compositional bias: basic residues. Residues 64-80 (SEQRLRPSEDLDPCKDD) are compositionally biased toward basic and acidic residues. The segment at 105–135 (DGYCPSCQMPFSLLVVQTPRWHVAECLDTPG) adopts a UBZ4-type zinc-finger fold. 4 residues coordinate Zn(2+): Cys108, Cys111, His126, and Cys130. Disordered regions lie at residues 191–219 (KSSC…NNEC) and 552–623 (GEAC…TTDE). Residues 210 to 219 (NLKNVPNNEC) are compositionally biased toward polar residues.

This sequence belongs to the DNA repair metallo-beta-lactamase (DRMBL) family. In terms of assembly, binds PIAS1.

Its subcellular location is the nucleus. The enzyme catalyses a beta-lactam + H2O = a substituted beta-amino acid. Functionally, may be required for DNA interstrand cross-link repair. This is DNA cross-link repair 1A protein (DCLRE1A) from Gallus gallus (Chicken).